The chain runs to 159 residues: S-ribosylhomocysteine lyase 1 (159 aa).

Fe cation contacts are provided by His-54, His-58, and Cys-124.

The protein belongs to the LuxS family. In terms of assembly, homodimer. The cofactor is Fe cation.

It catalyses the reaction S-(5-deoxy-D-ribos-5-yl)-L-homocysteine = (S)-4,5-dihydroxypentane-2,3-dione + L-homocysteine. Functionally, involved in the synthesis of autoinducer 2 (AI-2) which is secreted by bacteria and is used to communicate both the cell density and the metabolic potential of the environment. The regulation of gene expression in response to changes in cell density is called quorum sensing. Catalyzes the transformation of S-ribosylhomocysteine (RHC) to homocysteine (HC) and 4,5-dihydroxy-2,3-pentadione (DPD). This Lactobacillus delbrueckii subsp. bulgaricus (strain ATCC BAA-365 / Lb-18) protein is S-ribosylhomocysteine lyase 1.